Reading from the N-terminus, the 421-residue chain is Zinc finger protein 57 (421 aa).

Residues 15-88 (VSYEDVAVSF…SCTGVFKGGP (74 aa)) enclose the KRAB domain. The segment at 90 to 113 (FFCLTCGKCFKKNTFLFNHQFPVR) adopts a C2H2-type 1; degenerate zinc-finger fold. 2 C2H2-type zinc fingers span residues 140–162 (FFCNFCGKTYRDASGLSRHRRAH) and 168–190 (RSCPECGKCFRDQSEVNRHLKVH). The disordered stretch occupies residues 191 to 221 (QNKPAASNQAGNQASNQRLKSRVPPTTPRSQ). Over residues 195-207 (AASNQAGNQASNQ) the composition is skewed to low complexity. The C2H2-type 4 zinc-finger motif lies at 264 to 286 (ISCPYCHITFTMRTCLLTHLKIH). A C2H2-type 5; degenerate zinc finger spans residues 313–332 (YTCPVCDSSFRGKESLLDHL). The disordered stretch occupies residues 371–421 (GKRMESRRRRRKRACTENPETEGLSGKGRVAPWEMEGATSPESPVTEEDSD).

This sequence belongs to the krueppel C2H2-type zinc-finger protein family. As to expression, expressed in oocytes and in a subset of adult tissues. Expressed at high levels in testis, and at low levels in cerebellum. Present in sciatic nerve and spinal cord (at protein level).

The protein localises to the nucleus. Functionally, transcription regulator required to maintain maternal and paternal gene imprinting, a process by which gene expression is restricted in a parent of origin-specific manner by epigenetic modification of genomic DNA and chromatin, including DNA methylation. Acts by controlling DNA methylation during the earliest multicellular stages of development at multiple imprinting control regions (ICRs). Acts together with ZNF445, but ZFP57 plays the predominant role in imprinting maintenance. In contrast, in humans, ZNF445 seems to be the major factor early embryonic imprinting maintenance. Required for the establishment of maternal methylation imprints at SNRPN locus. Acts as a transcriptional repressor in Schwann cells. Binds to a 5'-TGCCGC-3' consensus sequence and recognizes the methylated CpG within this element. This chain is Zinc finger protein 57 (Zfp57), found in Mus musculus (Mouse).